Consider the following 155-residue polypeptide: Small ribosomal subunit protein uS7c (155 aa).

It belongs to the universal ribosomal protein uS7 family. As to quaternary structure, part of the 30S ribosomal subunit.

Its subcellular location is the plastid. It localises to the chloroplast. Its function is as follows. One of the primary rRNA binding proteins, it binds directly to 16S rRNA where it nucleates assembly of the head domain of the 30S subunit. The sequence is that of Small ribosomal subunit protein uS7c (rps7) from Butomus umbellatus (Flowering rush).